The sequence spans 250 residues: DNA repair protein RecO (250 aa).

The protein belongs to the RecO family.

In terms of biological role, involved in DNA repair and RecF pathway recombination. The sequence is that of DNA repair protein RecO from Lactobacillus acidophilus (strain ATCC 700396 / NCK56 / N2 / NCFM).